The primary structure comprises 285 residues: Ribosomal RNA large subunit methyltransferase F (285 aa).

It belongs to the methyltransferase superfamily. METTL16/RlmF family.

Its subcellular location is the cytoplasm. It catalyses the reaction adenosine(1618) in 23S rRNA + S-adenosyl-L-methionine = N(6)-methyladenosine(1618) in 23S rRNA + S-adenosyl-L-homocysteine + H(+). In terms of biological role, specifically methylates the adenine in position 1618 of 23S rRNA. This Christiangramia forsetii (strain DSM 17595 / CGMCC 1.15422 / KT0803) (Gramella forsetii) protein is Ribosomal RNA large subunit methyltransferase F.